The following is a 187-amino-acid chain: Ribosome-recycling factor (187 aa).

Belongs to the RRF family.

The protein resides in the cytoplasm. In terms of biological role, responsible for the release of ribosomes from messenger RNA at the termination of protein biosynthesis. May increase the efficiency of translation by recycling ribosomes from one round of translation to another. The polypeptide is Ribosome-recycling factor (Petrotoga mobilis (strain DSM 10674 / SJ95)).